The primary structure comprises 803 residues: Phenylalanine--tRNA ligase beta subunit (803 aa).

One can recognise a tRNA-binding domain in the interval 39-151 (SMKFSGIKIG…KNAIIGEDIK (113 aa)). Residues 406-482 (PKKILIKLYK…RFYGFEKIPI (77 aa)) form the B5 domain. Mg(2+) contacts are provided by D466 and D470. An FDX-ACB domain is found at 707–800 (SDIPFNYRDI…LKKNFLIEIR (94 aa)).

The protein belongs to the phenylalanyl-tRNA synthetase beta subunit family. Type 1 subfamily. Tetramer of two alpha and two beta subunits. Mg(2+) serves as cofactor.

It localises to the cytoplasm. The enzyme catalyses tRNA(Phe) + L-phenylalanine + ATP = L-phenylalanyl-tRNA(Phe) + AMP + diphosphate + H(+). In Wigglesworthia glossinidia brevipalpis, this protein is Phenylalanine--tRNA ligase beta subunit.